The following is a 100-amino-acid chain: Urease subunit gamma (100 aa).

This sequence belongs to the urease gamma subunit family. In terms of assembly, heterotrimer of UreA (gamma), UreB (beta) and UreC (alpha) subunits. Three heterotrimers associate to form the active enzyme.

The protein localises to the cytoplasm. It catalyses the reaction urea + 2 H2O + H(+) = hydrogencarbonate + 2 NH4(+). It functions in the pathway nitrogen metabolism; urea degradation; CO(2) and NH(3) from urea (urease route): step 1/1. This is Urease subunit gamma from Halalkalibacterium halodurans (strain ATCC BAA-125 / DSM 18197 / FERM 7344 / JCM 9153 / C-125) (Bacillus halodurans).